The primary structure comprises 342 residues: Nicotinate-nucleotide--dimethylbenzimidazole phosphoribosyltransferase (342 aa).

Glutamate 311 functions as the Proton acceptor in the catalytic mechanism.

It belongs to the CobT family.

The enzyme catalyses 5,6-dimethylbenzimidazole + nicotinate beta-D-ribonucleotide = alpha-ribazole 5'-phosphate + nicotinate + H(+). Its pathway is nucleoside biosynthesis; alpha-ribazole biosynthesis; alpha-ribazole from 5,6-dimethylbenzimidazole: step 1/2. In terms of biological role, catalyzes the synthesis of alpha-ribazole-5'-phosphate from nicotinate mononucleotide (NAMN) and 5,6-dimethylbenzimidazole (DMB). This is Nicotinate-nucleotide--dimethylbenzimidazole phosphoribosyltransferase from Shewanella piezotolerans (strain WP3 / JCM 13877).